The primary structure comprises 799 residues: MPERLAEMLLDLWTPLIILWITLPPCIYMAPMNQSQVLMSGSPLELNSLGEEQRILNRSKRGWVWNQMFVLEEFSGPEPILVGRLHTDLDPGSKKIKYILSGDGAGTIFQINDVTGDIHAIKRLDREEKAEYTLTAQAVDWETSKPLEPPSEFIIKVQDINDNAPEFLNGPYHATVPEMSILGTSVTNVTATDADDPVYGNSAKLVYSILEGQPYFSIEPETAIIKTALPNMDREAKEEYLVVIQAKDMGGHSGGLSGTTTLTVTLTDVNDNPPKFAQSLYHFSVPEDVVLGTAIGRVKANDQDIGENAQSSYDIIDGDGTALFEITSDAQAQDGIIRLRKPLDFETKKSYTLKVEAANVHIDPRFSGRGPFKDTATVKIVVEDADEPPVFSSPTYLLEVHENAALNSVIGQVTARDPDITSSPIRFSIDRHTDLERQFNINADDGKITLATPLDRELSVWHNITIIATEIRNHSQISRVPVAIKVLDVNDNAPEFASEYEAFLCENGKPGQVIQTVSAMDKDDPKNGHYFLYSLLPEMVNNPNFTIKKNEDNSLSILAKHNGFNRQKQEVYLLPIIISDSGNPPLSSTSTLTIRVCGCSNDGVVQSCNVEAYVLPIGLSMGALIAILACIILLLVIVVLFVTLRRHKNEPLIIKDDEDVRENIIRYDDEGGGEEDTEAFDIATLQNPDGINGFLPRKDIKPDLQFMPRQGLAPVPNGVDVDEFINVRLHEADNDPTAPPYDSIQIYGYEGRGSVAGSLSSLESTTSDSDQNFDYLSDWGPRFKRLGELYSVGESDKET.

Residues 1 to 29 (MPERLAEMLLDLWTPLIILWITLPPCIYM) form the signal peptide. Positions 30–61 (APMNQSQVLMSGSPLELNSLGEEQRILNRSKR) are excised as a propeptide. N-linked (GlcNAc...) asparagine glycosylation is found at asparagine 33 and asparagine 57. Cadherin domains follow at residues 62-167 (GWVW…APEF), 168-276 (LNGP…PPKF), 277-391 (AQSL…PPVF), 392-494 (SSPT…DNAP), and 495-616 (EFAS…YVLP). Over 62-621 (GWVWNQMFVL…AYVLPIGLSM (560 aa)) the chain is Extracellular. Asparagine 188 carries an N-linked (GlcNAc...) asparagine glycan. N-linked (GlcNAc...) asparagine glycosylation is found at asparagine 463, asparagine 473, and asparagine 544. The helical transmembrane segment at 622–642 (GALIAILACIILLLVIVVLFV) threads the bilayer. At 643 to 799 (TLRRHKNEPL…YSVGESDKET (157 aa)) the chain is on the cytoplasmic side. Serine 795 is subject to Phosphoserine.

Mainly expressed in brain. Found in certain nerve cell lines, such as retinoblasts, glioma cells and neuroblasts.

It localises to the cell membrane. Its function is as follows. Cadherins are calcium-dependent cell adhesion proteins. They preferentially interact with themselves in a homophilic manner in connecting cells; cadherins may thus contribute to the sorting of heterogeneous cell types. This chain is Cadherin-8 (CDH8), found in Homo sapiens (Human).